A 561-amino-acid polypeptide reads, in one-letter code: DNA ligase B (561 aa).

The active-site N6-AMP-lysine intermediate is Lys-125.

This sequence belongs to the NAD-dependent DNA ligase family. LigB subfamily.

The enzyme catalyses NAD(+) + (deoxyribonucleotide)n-3'-hydroxyl + 5'-phospho-(deoxyribonucleotide)m = (deoxyribonucleotide)n+m + AMP + beta-nicotinamide D-nucleotide.. In terms of biological role, catalyzes the formation of phosphodiester linkages between 5'-phosphoryl and 3'-hydroxyl groups in double-stranded DNA using NAD as a coenzyme and as the energy source for the reaction. The protein is DNA ligase B of Salmonella arizonae (strain ATCC BAA-731 / CDC346-86 / RSK2980).